We begin with the raw amino-acid sequence, 2098 residues long: Non-reducing polyketide synthase crz7 (2098 aa).

The Starter acyltransferase (SAT) domain maps to 8–243 (ILFGDQTVDP…IKLPITAAFH (236 aa)). A Ketosynthase family 3 (KS3) domain is found at 364-789 (SSDIAIIGFA…GGNTSLLLED (426 aa)). Catalysis depends on for beta-ketoacyl synthase activity residues C532, H667, and H706. The 325-residue stretch at 887-1211 (IFLFTGQGSQ…IANAYNSGVK (325 aa)) folds into the Malonyl-CoA:ACP transacylase (MAT) domain. The tract at residues 1270-1404 (TCLQGVENET…CTVMYGDGQQ (135 aa)) is N-terminal hotdog fold. The region spanning 1270–1578 (TCLQGVENET…FQQMKRTTLQ (309 aa)) is the PKS/mFAS DH domain. The Proton acceptor; for dehydratase activity role is filled by H1305. Residues 1431–1578 (IHRMLKEMIY…FQQMKRTTLQ (148 aa)) form a C-terminal hotdog fold region. D1491 acts as the Proton donor; for dehydratase activity in catalysis. The Carrier 1 domain occupies 1613 to 1690 (QSPSAGFSKV…ELRAFFLDKM (78 aa)). S1650 carries the O-(pantetheine 4'-phosphoryl)serine modification. The disordered stretch occupies residues 1693–1725 (PQATANDDDSDDSSEDEDPGYSRSQSNSTISTP). Acidic residues predominate over residues 1698-1711 (NDDDSDDSSEDEDP). Positions 1714-1724 (SRSQSNSTIST) are enriched in polar residues. One can recognise a Carrier 2 domain in the interval 1725 to 1802 (PEEPDVVSIL…DVQKALGPTS (78 aa)). S1762 carries the O-(pantetheine 4'-phosphoryl)serine modification. Residues 1844–2080 (LFLLPDGAGS…VSGNHFSIMF (237 aa)) are thioesterase (TE) domain.

The cofactor is pantetheine 4'-phosphate.

The protein operates within secondary metabolite biosynthesis. Functionally, non-reducing polyketide synthase; part of the gene cluster that mediates the biosynthesis of the red pigment cristazarin, a naphthazarin derivative. The polyketide product of crz7 is likely 2-acetyl-1,3,6,8-tetrahydoxynaphthalene (AT4HN) from which a probable biosynthetic route of cristazarin can be deduced. The presence of two O-methyltransferases (crz1 and crz2), an enoyl reductase (crz5), an oxidase (crz8), and a short-chain dehydrogenase (crz9) encoded in the cristazarin biosynthetic cluster is consistent with methylation of a hydroxyl group, addition of two hydroxyl groups to the naphthalene core ring, and reduction of the acetyl side chain. The sequence is that of Non-reducing polyketide synthase crz7 from Cladonia metacorallifera (Lichen-forming fungus).